The sequence spans 297 residues: Light-independent protochlorophyllide reductase iron-sulfur ATP-binding protein (297 aa).

Residues 41–46 and Lys70 contribute to the ATP site; that span reads GIGKST. Mg(2+) is bound at residue Ser45. Cys126 and Cys160 together coordinate [4Fe-4S] cluster. Residues 211–212 and 235–237 each bind ATP; these read NR and PDL.

The protein belongs to the NifH/BchL/ChlL family. As to quaternary structure, homodimer. Protochlorophyllide reductase is composed of three subunits; BchL, BchN and BchB. Requires [4Fe-4S] cluster as cofactor.

The enzyme catalyses chlorophyllide a + oxidized 2[4Fe-4S]-[ferredoxin] + 2 ADP + 2 phosphate = protochlorophyllide a + reduced 2[4Fe-4S]-[ferredoxin] + 2 ATP + 2 H2O. The protein operates within porphyrin-containing compound metabolism; bacteriochlorophyll biosynthesis (light-independent). Component of the dark-operative protochlorophyllide reductase (DPOR) that uses Mg-ATP and reduced ferredoxin to reduce ring D of protochlorophyllide (Pchlide) to form chlorophyllide a (Chlide). This reaction is light-independent. The L component serves as a unique electron donor to the NB-component of the complex, and binds Mg-ATP. The sequence is that of Light-independent protochlorophyllide reductase iron-sulfur ATP-binding protein from Cereibacter sphaeroides (strain KD131 / KCTC 12085) (Rhodobacter sphaeroides).